A 354-amino-acid chain; its full sequence is MAQASNSRIKVGIVGGTGYTGVELLRLLSQHPHVELTAITSRKEDGLPVADMYPNLRGRVKLAFSAPEKASLTDCDVVFFATPHGVAMAQAAELLAAGTRVIDLAADFRLQDTAVFERWYKIPHTCPDILADSVYGLVELNREAISKARVIGNPGCYPTTVLLGLAPLIEGGKQLVDVQTLIADCKSGVSGAGRKAEVGSLFSEASDNFKAYGVAGHRHQPEIVAQLEKLAGGKVGLTFVPHLVPMIRGMFSTLYARILPQARDTDFQALFEARYADEPFVDVMPAGSLPETRSVRASNNLRISVQRPGGGDQLVILVVQDNLVKGASGQAVQNMNLMFGLPESAGLDQVAILP.

Cys156 is an active-site residue.

This sequence belongs to the NAGSA dehydrogenase family. Type 1 subfamily.

It localises to the cytoplasm. The catalysed reaction is N-acetyl-L-glutamate 5-semialdehyde + phosphate + NADP(+) = N-acetyl-L-glutamyl 5-phosphate + NADPH + H(+). It functions in the pathway amino-acid biosynthesis; L-arginine biosynthesis; N(2)-acetyl-L-ornithine from L-glutamate: step 3/4. Its function is as follows. Catalyzes the NADPH-dependent reduction of N-acetyl-5-glutamyl phosphate to yield N-acetyl-L-glutamate 5-semialdehyde. The protein is N-acetyl-gamma-glutamyl-phosphate reductase of Bordetella pertussis (strain Tohama I / ATCC BAA-589 / NCTC 13251).